A 542-amino-acid chain; its full sequence is Phenylalanine--tRNA ligase beta subunit (542 aa).

Positions 269-344 (LRRYTVSVSA…MTIGYDKLSP (76 aa)) constitute a B5 domain. Mg(2+) contacts are provided by aspartate 322, aspartate 328, glutamate 331, and glutamate 332.

This sequence belongs to the phenylalanyl-tRNA synthetase beta subunit family. Type 2 subfamily. Tetramer of two alpha and two beta subunits. Mg(2+) serves as cofactor.

It localises to the cytoplasm. It catalyses the reaction tRNA(Phe) + L-phenylalanine + ATP = L-phenylalanyl-tRNA(Phe) + AMP + diphosphate + H(+). This chain is Phenylalanine--tRNA ligase beta subunit, found in Sulfolobus acidocaldarius (strain ATCC 33909 / DSM 639 / JCM 8929 / NBRC 15157 / NCIMB 11770).